We begin with the raw amino-acid sequence, 499 residues long: UDP-N-acetylmuramoylalanine--D-glutamate ligase (499 aa).

129 to 135 (GTNGKTT) contributes to the ATP binding site.

The protein belongs to the MurCDEF family.

It localises to the cytoplasm. It catalyses the reaction UDP-N-acetyl-alpha-D-muramoyl-L-alanine + D-glutamate + ATP = UDP-N-acetyl-alpha-D-muramoyl-L-alanyl-D-glutamate + ADP + phosphate + H(+). It participates in cell wall biogenesis; peptidoglycan biosynthesis. Functionally, cell wall formation. Catalyzes the addition of glutamate to the nucleotide precursor UDP-N-acetylmuramoyl-L-alanine (UMA). In Ralstonia nicotianae (strain ATCC BAA-1114 / GMI1000) (Ralstonia solanacearum), this protein is UDP-N-acetylmuramoylalanine--D-glutamate ligase.